The following is a 109-amino-acid chain: uncharacterized protein (109 aa).

To A.fulgidus AF1885.

This is an uncharacterized protein from Methanocaldococcus jannaschii (strain ATCC 43067 / DSM 2661 / JAL-1 / JCM 10045 / NBRC 100440) (Methanococcus jannaschii).